The sequence spans 127 residues: RxLR effector protein CRE6 (127 aa).

Positions Met-1–Ala-19 are cleaved as a signal peptide. Positions Arg-48–Arg-67 match the RxLR-dEER motif.

It belongs to the RxLR effector family.

Its subcellular location is the secreted. It localises to the host cell. In terms of biological role, effector that is involved in host plant infection. Contributes to virulence during the early infection stage, by inhibiting plant defense responses induced by both PAMP-triggered immunity (PTI) and effector-triggered immunity (ETI). This Phytophthora infestans (strain T30-4) (Potato late blight agent) protein is RxLR effector protein CRE6.